Here is a 212-residue protein sequence, read N- to C-terminus: External core antigen (212 aa).

A signal peptide spans 1-19 (MQLFHLCLIISCSCPTVQA). The segment at 25–27 (GWL) is HBEAG. The segment at 165–212 (NAPILSTLPETTVVRRRGRSPRRRTPSPRRRRSQSPRRRRSQSPASQC) is disordered. The span at 178–205 (VRRRGRSPRRRTPSPRRRRSQSPRRRRS) shows a compositional bias: basic residues. A 1; half-length repeat occupies 184–190 (SPRRRTP). The interval 184-206 (SPRRRTPSPRRRRSQSPRRRRSQ) is 3 X 8 AA repeats of S-P-R-R-R-R-S-Q. Residues 184–212 (SPRRRTPSPRRRRSQSPRRRRSQSPASQC) constitute a propeptide that is removed on maturation. Repeat copies occupy residues 191–198 (SPRRRRSQ) and 199–206 (SPRRRRSQ).

This sequence belongs to the orthohepadnavirus precore antigen family. In terms of assembly, homodimerizes. Phosphorylated. In terms of processing, cleaved by host furin.

It localises to the secreted. It is found in the host nucleus. Functionally, may regulate immune response to the intracellular capsid in acting as a T-cell tolerogen, by having an immunoregulatory effect which prevents destruction of infected cells by cytotoxic T-cells. This immune regulation may predispose to chronicity during perinatal infections and prevent severe liver injury during adult infections. In Hepatitis B virus genotype F2 subtype adw4q (isolate Senegal/9203) (HBV-F), this protein is External core antigen.